We begin with the raw amino-acid sequence, 359 residues long: Peptide chain release factor 1 (359 aa).

Glutamine 236 carries the post-translational modification N5-methylglutamine.

Belongs to the prokaryotic/mitochondrial release factor family. In terms of processing, methylated by PrmC. Methylation increases the termination efficiency of RF1.

Its subcellular location is the cytoplasm. Its function is as follows. Peptide chain release factor 1 directs the termination of translation in response to the peptide chain termination codons UAG and UAA. The protein is Peptide chain release factor 1 (prfA) of Mycoplasma genitalium (strain ATCC 33530 / DSM 19775 / NCTC 10195 / G37) (Mycoplasmoides genitalium).